The sequence spans 597 residues: ATP-dependent lipid A-core flippase (597 aa).

The next 6 helical transmembrane spans lie at 26 to 46, 65 to 85, 144 to 164, 166 to 186, 250 to 270, and 276 to 296; these read WIFA…TGLA, IQII…ANFI, ILTI…MAYL, GLLT…IWWV, AISQ…VIHL, and MLAQ…MLLL. One can recognise an ABC transmembrane type-1 domain in the interval 29–311; that stretch reads AASIITMAIY…LTKINGTLQR (283 aa). One can recognise an ABC transporter domain in the interval 343–579; that stretch reads IRFEHLSFCY…ESHYAGLYRL (237 aa). 377 to 384 is a binding site for ATP; sequence GHSGSGKS.

The protein belongs to the ABC transporter superfamily. Lipid exporter (TC 3.A.1.106) family. As to quaternary structure, homodimer.

It is found in the cell inner membrane. The catalysed reaction is ATP + H2O + lipid A-core oligosaccharideSide 1 = ADP + phosphate + lipid A-core oligosaccharideSide 2.. Involved in lipopolysaccharide (LPS) biosynthesis. Translocates lipid A-core from the inner to the outer leaflet of the inner membrane. Transmembrane domains (TMD) form a pore in the inner membrane and the ATP-binding domain (NBD) is responsible for energy generation. The chain is ATP-dependent lipid A-core flippase from Nitrosococcus oceani (strain ATCC 19707 / BCRC 17464 / JCM 30415 / NCIMB 11848 / C-107).